We begin with the raw amino-acid sequence, 319 residues long: Cell division protein PomZ (319 aa).

61–68 provides a ligand contact to ATP; the sequence is KGGTGKTS.

The protein belongs to the ParA family. As to quaternary structure, interacts with FtsZ in pull-down experiments.

It localises to the cytoplasm. In terms of biological role, spatial regulator of cell division that is involved in identifying the incipient division site, recruiting FtsZ to the division site and stabilizing the Z-ring. Binds ATP and GTP. In Myxococcus xanthus (strain DK1622), this protein is Cell division protein PomZ.